We begin with the raw amino-acid sequence, 341 residues long: Dihydroorotate dehydrogenase (quinone) (341 aa).

Residues 61 to 65 (AGLDK) and threonine 85 contribute to the FMN site. Lysine 65 contributes to the substrate binding site. Residue 110–114 (NRMGF) coordinates substrate. The FMN site is built by asparagine 138 and asparagine 171. Asparagine 171 lines the substrate pocket. The active-site Nucleophile is the serine 174. Asparagine 176 lines the substrate pocket. Lysine 216 and threonine 244 together coordinate FMN. 245–246 (NT) is a binding site for substrate. FMN contacts are provided by residues glycine 267, glycine 296, and 317 to 318 (YS).

Belongs to the dihydroorotate dehydrogenase family. Type 2 subfamily. As to quaternary structure, monomer. It depends on FMN as a cofactor.

It is found in the cell membrane. The enzyme catalyses (S)-dihydroorotate + a quinone = orotate + a quinol. It participates in pyrimidine metabolism; UMP biosynthesis via de novo pathway; orotate from (S)-dihydroorotate (quinone route): step 1/1. Functionally, catalyzes the conversion of dihydroorotate to orotate with quinone as electron acceptor. The protein is Dihydroorotate dehydrogenase (quinone) of Pseudomonas fluorescens (strain SBW25).